The sequence spans 638 residues: LIM domain kinase 2 (638 aa).

LIM zinc-binding domains follow at residues 12 to 63 and 72 to 124; these read CRGC…CHKD and CHGC…CGKC. The 88-residue stretch at 152–239 folds into the PDZ domain; sequence LISMPATTEC…TLQLLIEHDP (88 aa). Residue threonine 210 is modified to Phosphothreonine. A disordered region spans residues 255-304; that stretch reads PHMQSTGHTLMLSTLDTKENQEGTLRRRSLRRSNSISKSPGPSSPKEPLL. Polar residues predominate over residues 257–269; the sequence is MQSTGHTLMLSTL. Positions 270–279 are enriched in basic and acidic residues; sequence DTKENQEGTL. Residues 286–304 show a composition bias toward low complexity; it reads RSNSISKSPGPSSPKEPLL. A phosphoserine mark is found at serine 293 and serine 298. The Protein kinase domain maps to 331-608; the sequence is LIHGEVLGKG…DSFEALSLFL (278 aa). Residues 337–345 and lysine 360 contribute to the ATP site; that span reads LGKGFFGQA. Aspartate 451 is a catalytic residue. Residue threonine 505 is modified to Phosphothreonine; by ROCK1 and CDC42BP.

The protein belongs to the protein kinase superfamily. TKL Ser/Thr protein kinase family. Binds ROCK1 and MARF1. Interacts with NISCH. Phosphorylated on serine and/or threonine residues by ROCK1. In terms of tissue distribution, specifically expressed in the testes.

It is found in the cytoplasm. It localises to the cytoskeleton. Its subcellular location is the spindle. The protein localises to the microtubule organizing center. The protein resides in the centrosome. It is found in the nucleus. It localises to the perinuclear region. It carries out the reaction L-seryl-[protein] + ATP = O-phospho-L-seryl-[protein] + ADP + H(+). The catalysed reaction is L-threonyl-[protein] + ATP = O-phospho-L-threonyl-[protein] + ADP + H(+). Serine/threonine-protein kinase that plays an essential role in the regulation of actin filament dynamics. Acts downstream of several Rho family GTPase signal transduction pathways. Involved in astral microtubule organization and mitotic spindle orientation during early stages of mitosis by mediating phosphorylation of TPPP. Displays serine/threonine-specific phosphorylation of myelin basic protein and histone (MBP) in vitro. Suppresses ciliogenesis via multiple pathways; phosphorylation of CFL1, suppression of directional trafficking of ciliary vesicles to the ciliary base, and by facilitating YAP1 nuclear localization where it acts as a transcriptional corepressor of the TEAD4 target genes AURKA and PLK1. In Mus musculus (Mouse), this protein is LIM domain kinase 2 (Limk2).